Reading from the N-terminus, the 1845-residue chain is Collagen alpha-1(XXVII) chain (1845 aa).

A signal peptide spans 1–39 (MGTGFARGARGTAASGPGGGFLFAWILVSFTCHLASTQG). Residues 40–609 (APEDVDVLQR…LGPTPFPMLM (570 aa)) constitute a propeptide, N-terminal propeptide. The Laminin G-like domain maps to 72–237 (PSGFIFTQRA…NYCAHLRERC (166 aa)). N-linked (GlcNAc...) asparagine glycosylation occurs at Asn-272. 4 disordered regions span residues 299-478 (TKPL…VPKT), 502-572 (PPLG…RPST), 608-774 (LMGP…MGRP), and 827-1608 (LMGG…HPIQ). Residues 312 to 323 (HSSSQTPLSPAK) show a composition bias toward polar residues. Composition is skewed to low complexity over residues 327 to 343 (RKTPSPSSSASLANSTR) and 356 to 372 (TTTSPTKRSPTKPSVSP). Asn-340 carries N-linked (GlcNAc...) asparagine glycosylation. Pro residues predominate over residues 429-439 (PRPPVPSPQPL). The span at 444-454 (GLSKKFTNPTV) shows a compositional bias: polar residues. The segment covering 554–564 (SARDASPRDLT) has biased composition (basic and acidic residues). 11 consecutive Collagen-like domains span residues 610–664 (GPPG…GDPG), 673–732 (GAKG…PGPV), 742–801 (GYIG…PGPP), 817–876 (GYPG…PGPL), 877–936 (GKAG…EGPM), 937–996 (GPPG…VGEK), 997–1038 (GDRG…PGSR), 1039–1096 (GLPG…GAKG), 1117–1176 (GSQG…PGLE), 1177–1236 (GDHG…QGEK), and 1240–1299 (GAKG…NGHK). Positions 610 to 1603 (GPPGSKGDCG…RGRPGPPGPP (994 aa)) are triple-helical. Positions 639–654 (RGPPGPYGNPGPPGPP) are enriched in pro residues. Low complexity-rich tracts occupy residues 677–690 (NMGLPGLSGNPGPL) and 699–719 (PGAAGHPGEQGQPGPEGSPGA). Gly residues predominate over residues 865 to 874 (GLPGGRGKPG). The span at 896 to 909 (FPGDIGPPGDNGPE) shows a compositional bias: low complexity. Positions 1018 to 1027 (GTPGGIGNPG) are enriched in gly residues. 3 stretches are compositionally biased toward low complexity: residues 1074–1086 (RGRPGQPGQQGAA), 1112–1122 (LPGEPGSQGPQ), and 1152–1167 (KGDLGPLGPPGEQGLI). 2 stretches are compositionally biased toward basic and acidic residues: residues 1187–1212 (LKGDRGDPGPDGEHGEKGQEGLKGED) and 1226–1238 (REGKPGKQGEKGQ). Composition is skewed to basic and acidic residues over residues 1311–1323 (KGEKGDQGEDGKT) and 1335–1345 (PVGDRGDRGEP). A Collagen-like 12 domain is found at 1325–1384 (GPPGPPGDRGPVGDRGDRGEPGDPGYPGQEGVQGLRGEPGQQGQPGHPGPRGRPGPKGSK). Low complexity-rich tracts occupy residues 1360-1369 (RGEPGQQGQP), 1395-1422 (KAGPSGRRGTQGLQGLPGPRGVVGRQGP), and 1438-1465 (PGYQGDQGNDGDPGPVGPAGRRGNPGVA). Collagen-like domains follow at residues 1424–1483 (GTAG…SGLP), 1484–1543 (GQLG…KGIQ), and 1544–1603 (GPRG…PGPP). Residues 1557-1572 (IIGPPGMLGPSGLPGP) are compositionally biased toward low complexity. Residues 1588–1605 (RGPPGPRGRPGPPGPPWH) show a composition bias toward pro residues. Residues 1607–1845 (IQFQQDDLGA…RLEVGPACFL (239 aa)) constitute a propeptide, C-terminal propeptide. Positions 1645-1845 (GEIFKTLHYL…RLEVGPACFL (201 aa)) constitute a Fibrillar collagen NC1 domain. Intrachain disulfides connect Cys-1675/Cys-1707, Cys-1716/Cys-1843, and Cys-1752/Cys-1796. 4 residues coordinate Ca(2+): Asp-1693, Asn-1695, Cys-1698, and Asp-1701. Residue Asn-1754 is glycosylated (N-linked (GlcNAc...) asparagine).

Belongs to the fibrillar collagen family. Highly expressed in cartilage, eye and ear.

The protein resides in the secreted. It localises to the extracellular space. It is found in the extracellular matrix. Plays a role during the calcification of cartilage and the transition of cartilage to bone. In Mus musculus (Mouse), this protein is Collagen alpha-1(XXVII) chain (Col27a1).